We begin with the raw amino-acid sequence, 87 residues long: MNCLQLLLVLLLISTIAALHGDGRVPQRRGRNIRTMSNLLNFQTRDCPSSCPAVCPNQNECCDGDVCNYSNTLNKYFCIGCGSGGGE.

The first 18 residues, 1-18 (MNCLQLLLVLLLISTIAA), serve as a signal peptide directing secretion. A propeptide spanning residues 19 to 34 (LHGDGRVPQRRGRNIR) is cleaved from the precursor.

Post-translationally, contains 4 disulfide bonds. Expressed by the venom duct.

The protein localises to the secreted. Its function is as follows. May interact and inhibit Cav3.1/CACNA1G calcium channels. In a ex vivo model, shows ability to block nerve signal transduction. The sequence is that of Conotoxin QcMNCL-XIII0.1 from Conus quercinus (Oak cone).